Here is a 1423-residue protein sequence, read N- to C-terminus: Protein phosphatase Slingshot homolog 2 (1423 aa).

The interval 1–37 is disordered; sequence MALVTVQRSPTPSTTSSPCASEADSGEEECRSQPRSI. A compositionally biased stretch (low complexity) spans 9 to 18; the sequence is SPTPSTTSSP. Residues serine 17, serine 25, and serine 36 each carry the phosphoserine modification. The DEK-C domain occupies 248 to 303; the sequence is ERTERLIKTKLREIMMQKDLENITSKEIRTELEMQMVCNLREFKEFIDNEMIVILG. In terms of domain architecture, Tyrosine-protein phosphatase spans 307 to 448; it reads SPTQIFEHVF…LEEYQGILLA (142 aa). The active-site Phosphocysteine intermediate is cysteine 392. Phosphoserine is present on residues serine 461, serine 487, serine 534, serine 631, and serine 633. 10 disordered regions span residues 617-641, 664-684, 696-728, 797-825, 840-862, 877-954, 962-981, 1019-1041, 1070-1108, and 1144-1179; these read TSPLKDPPMSPDPESPSPQPSCQTE, QETRSRSFSHSRMEELGGGRN, PSKVTADDQRSSSLSNTPHASEESSMDEEQSKA, ENKPGHMEQDEDSCTAQPELAKDSGMCNP, EGEPAEGEQELQGSGMHPGAKWY, LRQE…NATV, FDHLPDPQEGPGSDTGTQQE, TSPNHTGPGSEIATSEKSGEQGL, SLHPQVLPLPHSSSPEHNRPTDHPTSILSSPEDRGSSLS, and TEQSSTTDEPSAEQVSWEESQESPLSSGSEVPYKDS. Residues 621–635 are compositionally biased toward pro residues; sequence KDPPMSPDPESPSPQ. Residues 664-680 show a composition bias toward basic and acidic residues; that stretch reads QETRSRSFSHSRMEELG. Residues 889–904 are compositionally biased toward polar residues; it reads TCTSLSTRKNSKNDSS. A compositionally biased stretch (basic and acidic residues) spans 910–932; it reads PKGKSDEAPPEHSFVLKEPEMSK. A compositionally biased stretch (polar residues) spans 941-953; that stretch reads EAGSLSHSEQNAT. Polar residues predominate over residues 1019–1034; that stretch reads TSPNHTGPGSEIATSE. Over residues 1144–1172 the composition is skewed to polar residues; the sequence is TEQSSTTDEPSAEQVSWEESQESPLSSGS. Phosphoserine is present on serine 1217. Threonine 1422 carries the post-translational modification Phosphothreonine.

The protein belongs to the protein-tyrosine phosphatase family. In terms of assembly, interacts with filamentous actin.

The protein resides in the cytoplasm. It localises to the cytoskeleton. It is found in the cell junction. Its subcellular location is the focal adhesion. The protein localises to the cytoplasmic vesicle. The protein resides in the secretory vesicle. It localises to the acrosome. The catalysed reaction is O-phospho-L-tyrosyl-[protein] + H2O = L-tyrosyl-[protein] + phosphate. It catalyses the reaction O-phospho-L-seryl-[protein] + H2O = L-seryl-[protein] + phosphate. The enzyme catalyses O-phospho-L-threonyl-[protein] + H2O = L-threonyl-[protein] + phosphate. Protein phosphatase which regulates actin filament dynamics. Dephosphorylates and activates the actin binding/depolymerizing factor cofilin, which subsequently binds to actin filaments and stimulates their disassembly. Inhibitory phosphorylation of cofilin is mediated by LIMK1, which may also be dephosphorylated and inactivated by this protein. Required for spermatogenesis. Involved in acrosome biogenesis, probably by regulating cofilin-mediated actin cytoskeleton remodeling during proacrosomal vesicle fusion and/or Golgi to perinuclear vesicle trafficking. The sequence is that of Protein phosphatase Slingshot homolog 2 (SSH2) from Homo sapiens (Human).